Consider the following 618-residue polypeptide: Probable protein disulfide-isomerase A4 (618 aa).

The signal sequence occupies residues 1–21 (MMFDRRFFALVVLLCVSAVRS). Thioredoxin domains follow at residues 22–139 (TEDA…SRVD), 138–254 (VDPN…DQSK), and 480–609 (SSGK…KHGV). Cystine bridges form between Cys-65–Cys-68, Cys-176–Cys-179, and Cys-529–Cys-532. A Prevents secretion from ER motif is present at residues 615–618 (KDEL).

It belongs to the protein disulfide isomerase family.

Its subcellular location is the endoplasmic reticulum lumen. The catalysed reaction is Catalyzes the rearrangement of -S-S- bonds in proteins.. The sequence is that of Probable protein disulfide-isomerase A4 from Caenorhabditis elegans.